The primary structure comprises 167 residues: NADPH-dependent 7-cyano-7-deazaguanine reductase (167 aa).

The segment at 1-24 (MTTRSQDQTRDLKVLGTGRLTSPE) is disordered. Residue Cys57 is the Thioimide intermediate of the active site. Catalysis depends on Asp64, which acts as the Proton donor. Residues 79 to 81 (VES) and 98 to 99 (ME) contribute to the substrate site.

It belongs to the GTP cyclohydrolase I family. QueF type 1 subfamily.

The protein localises to the cytoplasm. The enzyme catalyses 7-aminomethyl-7-carbaguanine + 2 NADP(+) = 7-cyano-7-deazaguanine + 2 NADPH + 3 H(+). Its pathway is tRNA modification; tRNA-queuosine biosynthesis. Functionally, catalyzes the NADPH-dependent reduction of 7-cyano-7-deazaguanine (preQ0) to 7-aminomethyl-7-deazaguanine (preQ1). In Desulfovibrio desulfuricans (strain ATCC 27774 / DSM 6949 / MB), this protein is NADPH-dependent 7-cyano-7-deazaguanine reductase.